We begin with the raw amino-acid sequence, 404 residues long: High affinity immunoglobulin gamma Fc receptor I (404 aa).

A signal peptide spans 1 to 24; the sequence is MILTSFGDDMWLLTTLLLWVPVGG. Over 25–297 the chain is Extracellular; it reads EVVNATKAVI…QVLGPQSSAP (273 aa). N-linked (GlcNAc...) asparagine glycosylation is found at Asn-28, Asn-48, Asn-69, Asn-168, and Asn-249. Ig-like C2-type domains lie at 32-111, 117-194, and 201-286; these read AVIT…LQIH, LQAS…SITV, and PVLR…PELE. 3 disulfide bridges follow: Cys-53–Cys-95, Cys-134–Cys-177, and Cys-221–Cys-269. The helical transmembrane segment at 298–320 threads the bilayer; it reads VWFHILFYLSVGIMFSLNTVLYV. The tract at residues 321–342 is interaction with EPB41L2; it reads KIHRLQREKKYNLEVPLVSEQG. Over 321 to 404 the chain is Cytoplasmic; that stretch reads KIHRLQREKK…DSTGAQTSQS (84 aa). Residues 346–404 form a disordered region; sequence NSFQQVRSDGVYEEVTATASQTTPKEAPDGPRSSVGDCGPEQPEPLPPSDSTGAQTSQS. Ser-347 bears the Phosphoserine mark. The residue at position 368 (Thr-368) is a Phosphothreonine. Residues 394 to 404 show a composition bias toward polar residues; the sequence is SDSTGAQTSQS.

The protein belongs to the immunoglobulin superfamily. FCGR1 family. Interacts with FCERG1; forms a functional signaling complex. Interacts with FLNA; prevents FCGR1A degradation. Interacts with EPB41L2, LAT and PPL. Interacts with HCK and LYN. In terms of processing, N-glycosylated. Phosphorylated on serine residues. Macrophage-specific.

It localises to the cell membrane. Functionally, high affinity receptor for the Fc region of immunoglobulins gamma. Functions in both innate and adaptive immune responses. The chain is High affinity immunoglobulin gamma Fc receptor I (Fcgr1) from Mus musculus (Mouse).